Here is a 105-residue protein sequence, read N- to C-terminus: uncharacterized protein (105 aa).

Positions 47–105 are disordered; the sequence is ENASAPRIQPSVTPSPAAPPSTDQLMMEKMMGSAGLNKYRKQEKEKQEEDGNGESLFDF. Residues 86-95 show a composition bias toward basic and acidic residues; sequence RKQEKEKQEE.

This is an uncharacterized protein from Bacillus subtilis (strain 168).